A 1050-amino-acid polypeptide reads, in one-letter code: uncharacterized protein (1050 aa).

The Cytoplasmic portion of the chain corresponds to 1–83 (MARLLTKSSQ…AVKLGTFEGC (83 aa)). Phosphoserine is present on residues serine 9 and serine 60. Threonine 64 carries the post-translational modification Phosphothreonine. Residues 84–104 (FIPTTLNVLSILLYLRFPWII) traverse the membrane as a helical segment. The Extracellular segment spans residues 105-112 (GEAGVLKT). A helical transmembrane segment spans residues 113–133 (LLMLFISYAVGIFTSLSISAI). The Cytoplasmic portion of the chain corresponds to 134–146 (CTNGMVRGGGAYY). Residues 147 to 169 (AVSRSIGPELGGSIGLIFYVGQI) form a helical membrane-spanning segment. The Extracellular portion of the chain corresponds to 170–202 (LNTGMNISGFVEPIISIFGKESGTISQFLPEGY). An N-linked (GlcNAc...) asparagine glycan is attached at asparagine 175. The helical transmembrane segment at 203–223 (WWVFLYTTCVLAMCCILCCLG) threads the bilayer. At 224–232 (SAIFAKASN) the chain is on the cytoplasmic side. The helical transmembrane segment at 233-253 (ALFVVIILSTISIPISSIFVH) threads the bilayer. The Extracellular portion of the chain corresponds to 254-295 (PFKDPSLLVHFTGLKWSTLMKNLASAYTENEKGTGYESFKST). Serine 270 carries the post-translational modification Phosphoserine. Residue threonine 271 is modified to Phosphothreonine. Residues 296-316 (FGVFFPATAGLLAGASMSGDL) traverse the membrane as a helical segment. The Cytoplasmic portion of the chain corresponds to 317–334 (KAPSRSIPKGTISSQATT). A helical membrane pass occupies residues 335 to 355 (FLLYLLVILCVGASVTRTGLL). The Extracellular portion of the chain corresponds to 356-368 (LDMDVMEHISLHP). Residues 369 to 389 (LFIISGILSSGAFSSFMGIFG) traverse the membrane as a helical segment. Residues 390–417 (AAKLLQAIARDDLIPGMFFFAKGSSYDD) lie on the Cytoplasmic side of the membrane. Residues 418 to 438 (IPYVAIGVTYLITQISLFWDI) traverse the membrane as a helical segment. Over 439-442 (NMLS) the chain is Extracellular. Residues 443–463 (SMITMTFLLTFGFINLSCFLL) traverse the membrane as a helical segment. Over 464–480 (RISSTPNFRPTFRYFNR) the chain is Cytoplasmic. The helical transmembrane segment at 481-497 (RTTLVGTILSFGVMFYV) threads the bilayer. Topologically, residues 498–499 (DR) are extracellular. The chain crosses the membrane as a helical span at residues 500–520 (LNAFISFLIAGILVVVIYFTC). Topologically, residues 521–1050 (PPKNWGDVSQ…SKSLTITTAL (530 aa)) are cytoplasmic. A Phosphoserine modification is found at serine 901. Residues 915–943 (ETESSFGNRSLSPKQENRRTYSDSTIESS) are disordered. Residues 916-928 (TESSFGNRSLSPK) are compositionally biased toward polar residues. Residue serine 936 is modified to Phosphoserine. The residue at position 939 (threonine 939) is a Phosphothreonine.

Belongs to the SLC12A transporter family.

Its subcellular location is the membrane. This is an uncharacterized protein from Schizosaccharomyces pombe (strain 972 / ATCC 24843) (Fission yeast).